Here is a 337-residue protein sequence, read N- to C-terminus: DNA-directed RNA polymerase subunit alpha (337 aa).

Residues 1–233 (MIQKNWQELI…DQLSVFVNFK (233 aa)) form an alpha N-terminal domain (alpha-NTD) region. The interval 249-337 (FNPALLKKVD…DLAKHYEDQY (89 aa)) is alpha C-terminal domain (alpha-CTD).

It belongs to the RNA polymerase alpha chain family. As to quaternary structure, homodimer. The RNAP catalytic core consists of 2 alpha, 1 beta, 1 beta' and 1 omega subunit. When a sigma factor is associated with the core the holoenzyme is formed, which can initiate transcription.

It catalyses the reaction RNA(n) + a ribonucleoside 5'-triphosphate = RNA(n+1) + diphosphate. DNA-dependent RNA polymerase catalyzes the transcription of DNA into RNA using the four ribonucleoside triphosphates as substrates. This Bartonella bacilliformis (strain ATCC 35685 / KC583 / Herrer 020/F12,63) protein is DNA-directed RNA polymerase subunit alpha.